The chain runs to 149 residues: Transcriptional repressor NrdR (149 aa).

The segment at 3 to 34 (CPFCAMEETKVIDSRLVSDGYQVRRRRECGYC) is a zinc-finger region. Positions 49–139 (PKIIKNDGSR…VYLSFDDINQ (91 aa)) constitute an ATP-cone domain.

This sequence belongs to the NrdR family. Requires Zn(2+) as cofactor.

Its function is as follows. Negatively regulates transcription of bacterial ribonucleotide reductase nrd genes and operons by binding to NrdR-boxes. The sequence is that of Transcriptional repressor NrdR from Histophilus somni (strain 129Pt) (Haemophilus somnus).